The sequence spans 359 residues: Nicotinate-nucleotide--dimethylbenzimidazole phosphoribosyltransferase (359 aa).

Glu-318 functions as the Proton acceptor in the catalytic mechanism.

It belongs to the CobT family. As to quaternary structure, homodimer.

The enzyme catalyses 5,6-dimethylbenzimidazole + nicotinate beta-D-ribonucleotide = alpha-ribazole 5'-phosphate + nicotinate + H(+). The protein operates within nucleoside biosynthesis; alpha-ribazole biosynthesis; alpha-ribazole from 5,6-dimethylbenzimidazole: step 1/2. Functionally, catalyzes the synthesis of alpha-ribazole-5'-phosphate from nicotinate mononucleotide (NAMN) and 5,6-dimethylbenzimidazole (DMB). The polypeptide is Nicotinate-nucleotide--dimethylbenzimidazole phosphoribosyltransferase (Escherichia coli (strain ATCC 8739 / DSM 1576 / NBRC 3972 / NCIMB 8545 / WDCM 00012 / Crooks)).